Consider the following 394-residue polypeptide: Protein arginine N-methyltransferase 8 (394 aa).

Residue glycine 2 is the site of N-myristoyl glycine attachment. The disordered stretch occupies residues 16 to 40; the sequence is MAENAAESTEVNSPPSQPPQPVVPA. 2 consecutive short sequence motifs (SH3-binding) follow at residues 29-42 and 53-58; these read PPSQ…PAKP and PSCPGR. Positions 30-39 are enriched in pro residues; it reads PSQPPQPVVP. Position 58 is an omega-N-methylarginine; by autocatalysis (arginine 58). Arginine 73 is modified (asymmetric dimethylarginine; by autocatalysis). Positions 73 to 394 constitute an SAM-dependent MTase PRMT-type domain; that stretch reads RDYYFDSYAH…TSVSNDYKMR (322 aa). S-adenosyl-L-methionine-binding positions include histidine 86, arginine 95, glycine 119, 119–122, glutamate 141, and glutamate 170; that span reads GSGT. Active-site residues include glutamate 185 and glutamate 194.

This sequence belongs to the class I-like SAM-binding methyltransferase superfamily. Protein arginine N-methyltransferase family. PRMT8 subfamily. As to quaternary structure, homodimer. Tetramer; individual homodimers associates to form a homotetramer. Homooctamer; individual homodimers associates to form a homooctamer and homooligomerization is required for proper localization to the cell membrane. Heterodimer with PRMT1; heterodimerization may recruit PRMT1 activity to the plasma membrane. Interacts with PRMT2 (via the SH3 domain). Interacts with FYN (via the SH3 domain). Interacts with EWS; independently of EWS methylation status. In terms of tissue distribution, brain-specific.

The protein resides in the cell membrane. It carries out the reaction L-arginyl-[protein] + S-adenosyl-L-methionine = N(omega)-methyl-L-arginyl-[protein] + S-adenosyl-L-homocysteine + H(+). The enzyme catalyses L-arginyl-[protein] + 2 S-adenosyl-L-methionine = N(omega),N(omega)-dimethyl-L-arginyl-[protein] + 2 S-adenosyl-L-homocysteine + 2 H(+). In terms of biological role, S-adenosyl-L-methionine-dependent and membrane-associated arginine methyltransferase that can both catalyze the formation of omega-N monomethylarginine (MMA) and asymmetrical dimethylarginine (aDMA) in proteins such as NIFK, myelin basic protein, histone H4, H2A and H2A/H2B dimer. Able to mono- and dimethylate EWS protein; however its precise role toward EWS remains unclear as it still interacts with fully methylated EWS. The chain is Protein arginine N-methyltransferase 8 from Homo sapiens (Human).